The following is a 432-amino-acid chain: Carbohydrate esterase MZ0003 (432 aa).

The signal sequence occupies residues 1 to 25 (MQRTCVLIVLIVTSTMWTPDPDVYA). Residues 266–271 (GHSRLG) carry the GXSYXG catalytic site motif motif. S268 (nucleophile) is an active-site residue. Residues K272 and W359 each coordinate substrate. Catalysis depends on H409, which acts as the Charge relay system.

This sequence belongs to the carbohydrate esterase 15 (CE15) family. Requires Does not require metal ions for activity. as cofactor.

It localises to the periplasm. Is inhibited by PMSF and by NaF in vitro, which is consistent with the catalytic nucleophile being a serine. In terms of biological role, displays some glucuronoyl esterase activity in vitro, since it is able to hydrolyze methyl 4-O-methyl-D-glucopyranosyluronate, allyl D-glucuronate, benzyl D-glucuronate and D-glucuronic acid methyl ester. However, esters of glucuronic acid are probably not its biological substrate, as they are not present in the marine environment. Can also hydrolyze a range of other esters, including p-nitrophenyl acetate. More likely biologically-relevant substrates for MZ0003 and other marine bacterial CE15s are algal cell wall polysaccharides, as these would be readily available in this environment and could be used as energy sources. The chain is Carbohydrate esterase MZ0003 from Unknown prokaryotic organism.